A 148-amino-acid polypeptide reads, in one-letter code: Lysozyme C (148 aa).

An N-terminal signal peptide occupies residues 1 to 18; sequence MKAVIILGLVLLSVTVQG. One can recognise a C-type lysozyme domain in the interval 19 to 148; the sequence is KIFERCELAR…VSQYVQGCGV (130 aa). 4 disulfide bridges follow: Cys24–Cys146, Cys48–Cys134, Cys83–Cys99, and Cys95–Cys113. Active-site residues include Glu53 and Asp71.

It belongs to the glycosyl hydrolase 22 family. Monomer.

The catalysed reaction is Hydrolysis of (1-&gt;4)-beta-linkages between N-acetylmuramic acid and N-acetyl-D-glucosamine residues in a peptidoglycan and between N-acetyl-D-glucosamine residues in chitodextrins.. In terms of biological role, lysozymes have primarily a bacteriolytic function; those in tissues and body fluids are associated with the monocyte-macrophage system and enhance the activity of immunoagents. The polypeptide is Lysozyme C (LYZ) (Erythrocebus patas (Red guenon)).